The chain runs to 539 residues: Phosphoenolpyruvate carboxykinase (ATP) (539 aa).

Residues Arg61, Tyr195, and Lys201 each coordinate substrate. ATP-binding positions include Lys201, His220, and Gly238–Thr246. Mn(2+) is bound by residues Lys201 and His220. Asp259 is a Mn(2+) binding site. The ATP site is built by Glu287, Arg325, and Thr450. Position 325 (Arg325) interacts with substrate.

It belongs to the phosphoenolpyruvate carboxykinase (ATP) family. It depends on Mn(2+) as a cofactor.

It localises to the cytoplasm. It catalyses the reaction oxaloacetate + ATP = phosphoenolpyruvate + ADP + CO2. The protein operates within carbohydrate biosynthesis; gluconeogenesis. Functionally, involved in the gluconeogenesis. Catalyzes the conversion of oxaloacetate (OAA) to phosphoenolpyruvate (PEP) through direct phosphoryl transfer between the nucleoside triphosphate and OAA. This is Phosphoenolpyruvate carboxykinase (ATP) from Methylorubrum populi (strain ATCC BAA-705 / NCIMB 13946 / BJ001) (Methylobacterium populi).